Reading from the N-terminus, the 443-residue chain is Adenylosuccinate synthetase (443 aa).

GTP is bound by residues 12–18 and 40–42; these read GDEGKGK and GHT. Residue Asp13 is the Proton acceptor of the active site. Positions 13 and 40 each coordinate Mg(2+). IMP contacts are provided by residues 13-16, 38-41, Thr128, Arg142, Gln223, Thr238, and Arg302; these read DEGK and NAGH. His41 acts as the Proton donor in catalysis. 298–304 contacts substrate; it reads TTTGRRR. GTP is bound by residues Arg304, 330-332, and 412-414; these read KLD and SLG.

It belongs to the adenylosuccinate synthetase family. Homodimer. Requires Mg(2+) as cofactor.

The protein resides in the cytoplasm. It catalyses the reaction IMP + L-aspartate + GTP = N(6)-(1,2-dicarboxyethyl)-AMP + GDP + phosphate + 2 H(+). The protein operates within purine metabolism; AMP biosynthesis via de novo pathway; AMP from IMP: step 1/2. In terms of biological role, plays an important role in the de novo pathway of purine nucleotide biosynthesis. Catalyzes the first committed step in the biosynthesis of AMP from IMP. The sequence is that of Adenylosuccinate synthetase from Picosynechococcus sp. (strain ATCC 27264 / PCC 7002 / PR-6) (Agmenellum quadruplicatum).